The following is a 189-amino-acid chain: Elongation factor P (189 aa).

It belongs to the elongation factor P family.

The protein localises to the cytoplasm. It participates in protein biosynthesis; polypeptide chain elongation. Its function is as follows. Involved in peptide bond synthesis. Stimulates efficient translation and peptide-bond synthesis on native or reconstituted 70S ribosomes in vitro. Probably functions indirectly by altering the affinity of the ribosome for aminoacyl-tRNA, thus increasing their reactivity as acceptors for peptidyl transferase. The chain is Elongation factor P from Pseudomonas entomophila (strain L48).